The following is a 415-amino-acid chain: Serine hydroxymethyltransferase (415 aa).

(6S)-5,6,7,8-tetrahydrofolate-binding positions include Leu121 and 125 to 127 (GHL). Lys230 carries the post-translational modification N6-(pyridoxal phosphate)lysine.

It belongs to the SHMT family. Homodimer. Pyridoxal 5'-phosphate is required as a cofactor.

The protein localises to the cytoplasm. It carries out the reaction (6R)-5,10-methylene-5,6,7,8-tetrahydrofolate + glycine + H2O = (6S)-5,6,7,8-tetrahydrofolate + L-serine. It participates in one-carbon metabolism; tetrahydrofolate interconversion. The protein operates within amino-acid biosynthesis; glycine biosynthesis; glycine from L-serine: step 1/1. Its function is as follows. Catalyzes the reversible interconversion of serine and glycine with tetrahydrofolate (THF) serving as the one-carbon carrier. This reaction serves as the major source of one-carbon groups required for the biosynthesis of purines, thymidylate, methionine, and other important biomolecules. Also exhibits THF-independent aldolase activity toward beta-hydroxyamino acids, producing glycine and aldehydes, via a retro-aldol mechanism. This chain is Serine hydroxymethyltransferase, found in Syntrophomonas wolfei subsp. wolfei (strain DSM 2245B / Goettingen).